The chain runs to 1207 residues: MAYVALCKALYDYVAQAEDELNLTEDDHLYILESDDPEWWKAKLRRLDEHGTPIQDDSDDSTVGLVPANYVEEAEPIRLSRALYDYEAQTEEELSMAEDELLRVYESDGVWLLVKKQGNDPLSGGEGRLGYVPANYVDEAEAVDTGAAPAVEDEYTAADEDDEDDDDTDVTGSGAPIPQIHLPQTAQLGKGDNIKMWPVSALDSKKKKKKGTLGIGNASLFFASESDKTPVKKISILHIASHSLEKGKTLHLQLSPEAGLSESTLDFHAGSKDAANDIIRKIEVSKANALTAAAAPVPVPVPAPAPPAAAAAAASAAVPLPPPPPPAPPVASAAALPPPTRTTSATLPPPVRKNVSFQSQPAAEPEEAVEHGVAMYDFEAQGDDELTVTENEHLIILEKENDDWWKVRNDAGQEGVVPASYVEATDASAAAGASSGATAAAALAAQQEEEERLRREEEEAATVAEAERQREAVDRQREARERGEREEKERARREALKAQPVPAPPKLTQRPSTTDVSRAAKNVAIPQGRSAPERPKDGGSRSKPSPTNTRMWTDRTGAFKVEAEFLGFNQGKIRLHKMNGVVIEVAIEKMSNGDIAFLEDITGKKLNPTDEEIAASAARRRERERERQSSRPQSSAVAGMPREDRERERERRKEKEREQRRRESARSGPKRNVDWFEFFLAAGVDVDDCTRYASSFERDKIDETVLADLDPSTLRSIGLREGDIIRVTKFIDKKYRRDKSHSSLSSSRASGRANANTAADLERQIKADEELARKLQEQESSARRGDSVSPAPPQLFSGPDGTLKNNTRRGRPTPKSTSSSNVDAASLAAASESLARTATPPARTATASPAVAPKRTGSSLANGFDDDAWTPRPPSTKPTTPARPTVASPAPSTPAAPAAPPAPTPPPAAVAVASSAPPADPNSALFEKLAAMKAPSASVSPRPGVSPSPGSSFLGQSQMYNPNAPRGPFAPVPANQGLLQPLVPTQGTGQFVPTKTGMMGMQMTGMQPQLTGWGMQGMQGMQPQMTGFNNSMGSMSVMGGMGMQPQATGFGNGNGYGMNGSSPFTGGQISTQQTGLVGMGMQPQATGFNNFGQNAQQMMTQQTGFGMGSQQQGQQLQAEQDEKEKFKASNIFQQMKTGAFAKDPNAAPQSSEKYDALRPQPTGFQPGGVMPQFTGMGFGQSAQQQQQQQQQQYPYNNAYGGGFGGGF.

SH3 domains are found at residues 2–76 and 77–142; these read AYVA…EAEP and IRLS…EAEA. Disordered stretches follow at residues 143 to 185, 325 to 367, 448 to 553, 609 to 667, 736 to 757, 773 to 919, 936 to 979, and 1175 to 1207; these read VDTG…LPQT, PPAP…EPEE, EEEE…RMWT, TDEE…SARS, RRDKSHSSLSSSRASGRANANT, RKLQ…APPA, SASV…QGLL, and GMGFGQSAQQQQQQQQQQYPYNNAYGGGFGGGF. The segment covering 151-169 has biased composition (acidic residues); that stretch reads VEDEYTAADEDDEDDDDTD. Positions 367–427 constitute an SH3 3 domain; it reads EAVEHGVAMY…PASYVEATDA (61 aa). 2 stretches are compositionally biased toward basic and acidic residues: residues 465–496 and 531–540; these read EAERQREAVDRQREARERGEREEKERARREAL and APERPKDGGS. The segment covering 542-551 has biased composition (polar residues); sequence SKPSPTNTRM. 2 stretches are compositionally biased toward basic and acidic residues: residues 619 to 629 and 641 to 665; these read RRRERERERQS and PREDRERERERRKEKEREQRRRESA. Over residues 742–757 the composition is skewed to low complexity; the sequence is SSLSSSRASGRANANT. Residues 773–786 show a composition bias toward basic and acidic residues; it reads RKLQEQESSARRGD. Composition is skewed to low complexity over residues 818–853 and 877–890; these read SSSNVDAASLAAASESLARTATPPARTATASPAVAP and KPTTPARPTVASPA. Positions 891-908 are enriched in pro residues; the sequence is PSTPAAPAAPPAPTPPPA. Low complexity-rich tracts occupy residues 909-919, 936-952, and 1183-1192; these read AVAVASSAPPA, SASVSPRPGVSPSPGSS, and QQQQQQQQQQ.

Belongs to the SLA1 family. In terms of assembly, component of the PAN1 actin cytoskeleton-regulatory complex.

It localises to the cell membrane. The protein localises to the endosome membrane. It is found in the cytoplasm. Its subcellular location is the cytoskeleton. The protein resides in the actin patch. In terms of biological role, component of the PAN1 actin cytoskeleton-regulatory complex required for the internalization of endosomes during actin-coupled endocytosis. The complex links the site of endocytosis to the cell membrane-associated actin cytoskeleton. Mediates uptake of external molecules and vacuolar degradation of plasma membrane proteins. Plays a role in the proper organization of the cell membrane-associated actin cytoskeleton and promotes its destabilization. This is Actin cytoskeleton-regulatory complex protein SLA1 (SLA1) from Mycosarcoma maydis (Corn smut fungus).